The sequence spans 746 residues: Alpha-galactosidase 2 (746 aa).

An N-terminal signal peptide occupies residues 1–26 (MLGAPSPRRLADVLAVTAGLVASVRA). Asn-43, Asn-156, Asn-180, Asn-188, Asn-360, Asn-427, Asn-446, and Asn-495 each carry an N-linked (GlcNAc...) asparagine glycan. The active-site Nucleophile is Asp-504. The active-site Proton donor is the Asp-566. Asn-714 carries an N-linked (GlcNAc...) asparagine glycan.

Belongs to the glycosyl hydrolase 27 family.

It localises to the secreted. The catalysed reaction is Hydrolysis of terminal, non-reducing alpha-D-galactose residues in alpha-D-galactosides, including galactose oligosaccharides, galactomannans and galactolipids.. Functionally, alpha-galactosidase involved in the degradation of simple oligosaccharides like melibiose, raffinose and stachyose, and of polymeric galacto(gluco)mannans. The sequence is that of Alpha-galactosidase 2 (agl2) from Hypocrea jecorina (Trichoderma reesei).